The primary structure comprises 371 residues: Large ribosomal subunit protein bL27m (371 aa).

The transit peptide at 1–27 (MWNPILLDTSSFSFQKHVSGVFLQVRN) directs the protein to the mitochondrion.

Belongs to the bacterial ribosomal protein bL27 family. Component of the mitochondrial large ribosomal subunit (mt-LSU). Mature yeast 74S mitochondrial ribosomes consist of a small (37S) and a large (54S) subunit. The 37S small subunit contains a 15S ribosomal RNA (15S mt-rRNA) and 34 different proteins. The 54S large subunit contains a 21S rRNA (21S mt-rRNA) and 46 different proteins.

The protein resides in the mitochondrion. Its function is as follows. Component of the mitochondrial ribosome (mitoribosome), a dedicated translation machinery responsible for the synthesis of mitochondrial genome-encoded proteins, including at least some of the essential transmembrane subunits of the mitochondrial respiratory chain. The mitoribosomes are attached to the mitochondrial inner membrane and translation products are cotranslationally integrated into the membrane. This chain is Large ribosomal subunit protein bL27m (MRP7), found in Saccharomyces cerevisiae (strain ATCC 204508 / S288c) (Baker's yeast).